Reading from the N-terminus, the 725-residue chain is MNTTRDANRLRQRASLSGLALAGSLGLAGCGVLGLAGCGGDNNSSTSGNVKPSFVGTVTVTRHDGANDDLLTAGLGAAGLASASAPSVATPTAPTAAELRRLDIYASYRALVDTAANGGYGTLYGPSVDVNGNATSGSGMVPGVEYIAYSDDGTGQQNVVLLVQIPDAFDPANPCIITATSSGSRGIYGAISTGEWGLKHKCAVAYTDKGTGAGPHDLATDTVPLQDGTRTTRLAAGRTAQFAAPLTDSQLAAFNAATPNRLAFKHAHSQRNPEKDWGLFTLQAVQFAFWAINDKLGAAGMPAGSPLPVRRDNTIVIASSISNGGGAAIAAAEQDTAGWIDGVAVGEPGLNLPPSANVQVARGGVTLPVSGKPLFDYVSYANLFRLCAASSSGVSAAPTQAFFAGAVGWPASVQANRCAALRANGLLSSATAAAQADEALQKLHAFGWEPESDLVHASMSYFEIDPSVAVTFGNALARASVLDNLCNFSFAAVDSAFHPTAVNATSLAQMAALGNGIPPTSGVQLINNLAQGGPTQSKQSVDGSGALAANLDGALCLRNLLTGGDAASLALQAGIAQTLRTGNLHGKPALIVQGRNDALLPVNHGARPYLGLNAQTDSSSRLSYIEVMNAQHFDGFIDLVPGYDTLFVPLVLYEQRALDAVFANLKNGTPLPPSQVVRTTPRGGTAGAAPAITAANVPNFTMTPAAGDRIGVSVSGGVATVSVPN.

Positions 1-22 are cleaved as a signal peptide; sequence MNTTRDANRLRQRASLSGLALA. The active-site Charge relay system is S322.

The protein belongs to the D-(-)-3-hydroxybutyrate oligomer hydrolase family.

The protein localises to the secreted. It catalyses the reaction (3R)-hydroxybutanoate dimer + H2O = 2 (R)-3-hydroxybutanoate + H(+). The protein operates within lipid metabolism; butanoate metabolism. In terms of biological role, participates in the degradation of poly-3-hydroxybutyrate (PHB). It works downstream of poly(3-hydroxybutyrate) depolymerase, hydrolyzing D(-)-3-hydroxybutyrate oligomers of various length (3HB-oligomers) into 3HB-monomers. This is D-(-)-3-hydroxybutyrate oligomer hydrolase from Ralstonia nicotianae (strain ATCC BAA-1114 / GMI1000) (Ralstonia solanacearum).